The sequence spans 629 residues: Phosphatidylinositol-3,5-bisphosphate 3-phosphatase MTMR8 (629 aa).

The Myotubularin phosphatase domain maps to Gly-126 to Tyr-500. A 1,2-diacyl-sn-glycero-3-phospho-(1D-myo-inositol-3,5-bisphosphate) is bound by residues Asn-250, Asn-275, and Ile-276. 3 residues coordinate a 1,2-diacyl-sn-glycero-3-phospho-(1D-myo-inositol-3-phosphate): Asn-250, Asn-275, and Ile-276. Cys-338 acts as the Phosphocysteine intermediate in catalysis. A 1,2-diacyl-sn-glycero-3-phospho-(1D-myo-inositol-3,5-bisphosphate)-binding residues include Ser-339, Asp-340, Gly-341, Trp-342, Asp-343, Arg-344, Lys-380, and Arg-384. Residues Ser-339, Asp-340, Gly-341, Trp-342, Asp-343, and Arg-344 each contribute to the a 1,2-diacyl-sn-glycero-3-phospho-(1D-myo-inositol-3-phosphate) site. Phosphate contacts are provided by Ser-339 and Asp-340. Phosphate is bound by residues Trp-342, Asp-343, and Arg-344. Arg-384 serves as a coordination point for a 1,2-diacyl-sn-glycero-3-phospho-(1D-myo-inositol-3-phosphate). A coiled-coil region spans residues Leu-517–Gly-543.

This sequence belongs to the protein-tyrosine phosphatase family. Non-receptor class myotubularin subfamily. As to quaternary structure, homodimer.

The protein localises to the nucleus envelope. It carries out the reaction a 1,2-diacyl-sn-glycero-3-phospho-(1D-myo-inositol-3,5-bisphosphate) + H2O = a 1,2-diacyl-sn-glycero-3-phospho-(1D-myo-inositol-5-phosphate) + phosphate. The catalysed reaction is a 1,2-diacyl-sn-glycero-3-phospho-(1D-myo-inositol-3-phosphate) + H2O = a 1,2-diacyl-sn-glycero-3-phospho-(1D-myo-inositol) + phosphate. The enzyme catalyses 1,2-dioctanoyl-sn-glycero-3-phospho-(1D-myo-inositol-3,5-bisphosphate) + H2O = 1,2-dioctanoyl-sn-glycero-3-phospho-(1D-myo-inositol-5-phosphate) + phosphate. Its function is as follows. Lipid phosphatase that specifically dephosphorylates the D-3 position of phosphatidylinositol 3-phosphate and phosphatidylinositol 3,5-bisphosphate, generating phosphatidylinositol and phosphatidylinositol 5-phosphate. The protein is Phosphatidylinositol-3,5-bisphosphate 3-phosphatase MTMR8 of Gallus gallus (Chicken).